A 330-amino-acid polypeptide reads, in one-letter code: Aspartate--ammonia ligase (330 aa).

This sequence belongs to the class-II aminoacyl-tRNA synthetase family. AsnA subfamily.

Its subcellular location is the cytoplasm. The enzyme catalyses L-aspartate + NH4(+) + ATP = L-asparagine + AMP + diphosphate + H(+). Its pathway is amino-acid biosynthesis; L-asparagine biosynthesis; L-asparagine from L-aspartate (ammonia route): step 1/1. The sequence is that of Aspartate--ammonia ligase from Streptococcus pneumoniae serotype 19F (strain G54).